A 583-amino-acid chain; its full sequence is MMEDQQSLHSFISDYDQRSHAVEKYDGPDLSEVDSEDNDKMIKTNEDEAVKEPIYRTRSNQTEPDIANAPPYSRFDAKYKMALVLQCAYTGLFSTMAGAIYYPVLSVIEKQFHITEELVNITVVVYFIFQGIAPTLMGGLADSLGRRPVVLFAVTVYFGACIGLACAQTYAQIVVLRCLQAAGISPVIAINSGIIGDVTTRAERGGYVGYISGFQVLGSAFGALIGAGLSSRWGWRSIFWFLAIGSGVCLVFSIIMLPETKRTIVGNGSVTPRNYLNRAPLLMFPLIRRKLHLDDPEYETLEPRTQLSLLAPLSILKVKEISILLVTAGIQFATWSTHQTALSTVLSKNYHLSVAKIGLCYLPTGICTLISIVTSGRYLNWSYRRRFAKHKVWLKEQEEILVKENGYSREEVQNIINNDPKYVFNLVQTRLHAAFVTLLLSSSGFVAFGWCIDVKAPLASVLVMSGFASLFSNCILTFSTTLIVDIFPSKTSTATGCLNLFRCLLSALFIGCLSKMATSMTYGGVFTFLGALTALSACPLFYLLKNGREITLKRKRKEDASRAFALSVANEKAEAEGKAEESR.

Residues 23-46 (EKYDGPDLSEVDSEDNDKMIKTNE) are disordered. Residue Asn60 is glycosylated (N-linked (GlcNAc...) asparagine). The helical transmembrane segment at 88 to 108 (AYTGLFSTMAGAIYYPVLSVI) threads the bilayer. Asn120 carries N-linked (GlcNAc...) asparagine glycosylation. 5 consecutive transmembrane segments (helical) span residues 121-141 (ITVV…GGLA), 148-168 (PVVL…ACAQ), 178-198 (CLQA…IGDV), 208-228 (VGYI…IGAG), and 238-258 (IFWF…IMLP). Residue Asn267 is glycosylated (N-linked (GlcNAc...) asparagine). 2 helical membrane-spanning segments follow: residues 323 to 342 (ILLV…QTAL) and 354 to 374 (VAKI…SIVT). A glycan (N-linked (GlcNAc...) asparagine) is linked at Asn380. A run of 4 helical transmembrane segments spans residues 432–452 (HAAF…GWCI), 458–478 (LASV…ILTF), 493–513 (TATG…IGCL), and 524–544 (GVFT…FYLL).

This sequence belongs to the major facilitator superfamily. CAR1 family.

It localises to the cell membrane. In terms of biological role, multidrug resistance transporter involved in resistance to the antifungal drugs miconazole, tioconazole, clotrimazole, and ketoconazole; as well as to quinidine. Decreases the intracellular accumulation of clotrimazole in and plays a role in the extrusion of this antifungal from preloaded cells. In Candida glabrata (strain ATCC 2001 / BCRC 20586 / JCM 3761 / NBRC 0622 / NRRL Y-65 / CBS 138) (Yeast), this protein is Multidrug transporter QDR2.